Consider the following 61-residue polypeptide: Photosystem II reaction center protein K (61 aa).

Residues 1–24 (MLNIFSLICICLHSTLYSSSFFLA) constitute a propeptide that is removed on maturation. A helical transmembrane segment spans residues 36–56 (IVDFMPVIPLLFFLLAFVWQA).

This sequence belongs to the PsbK family. In terms of assembly, PSII is composed of 1 copy each of membrane proteins PsbA, PsbB, PsbC, PsbD, PsbE, PsbF, PsbH, PsbI, PsbJ, PsbK, PsbL, PsbM, PsbT, PsbX, PsbY, PsbZ, Psb30/Ycf12, at least 3 peripheral proteins of the oxygen-evolving complex and a large number of cofactors. It forms dimeric complexes.

It localises to the plastid. It is found in the chloroplast thylakoid membrane. One of the components of the core complex of photosystem II (PSII). PSII is a light-driven water:plastoquinone oxidoreductase that uses light energy to abstract electrons from H(2)O, generating O(2) and a proton gradient subsequently used for ATP formation. It consists of a core antenna complex that captures photons, and an electron transfer chain that converts photonic excitation into a charge separation. This Eucalyptus globulus subsp. globulus (Tasmanian blue gum) protein is Photosystem II reaction center protein K.